The chain runs to 222 residues: NADH dehydrogenase [ubiquinone] iron-sulfur protein 8-A, mitochondrial (222 aa).

2 4Fe-4S ferredoxin-type domains span residues 114 to 143 (RRYP…IEAE) and 153 to 182 (TRYD…EGPN). [4Fe-4S] cluster is bound by residues Cys-123, Cys-126, Cys-129, Cys-133, Cys-162, Cys-165, Cys-168, and Cys-172.

The protein belongs to the complex I 23 kDa subunit family. As to quaternary structure, complex I is composed of at least 49 different subunits. This is a component of the iron-sulfur (IP) fragment of the enzyme. It depends on [4Fe-4S] cluster as a cofactor.

It is found in the mitochondrion. The enzyme catalyses a ubiquinone + NADH + 5 H(+)(in) = a ubiquinol + NAD(+) + 4 H(+)(out). Its function is as follows. Core subunit of the mitochondrial membrane respiratory chain NADH dehydrogenase (Complex I) that is believed to belong to the minimal assembly required for catalysis. Complex I functions in the transfer of electrons from NADH to the respiratory chain. The immediate electron acceptor for the enzyme is believed to be ubiquinone. May donate electrons to ubiquinone. This is NADH dehydrogenase [ubiquinone] iron-sulfur protein 8-A, mitochondrial from Arabidopsis thaliana (Mouse-ear cress).